The chain runs to 243 residues: Max-interacting protein 1 (243 aa).

Positions 76–128 (HYRSTHNELEKNRRAHLRLCLERLKTLIPLGPECSRHTTLGLLNKAKAHIKKL) constitute a bHLH domain. Residues 164–235 (EAERIRTDSM…TASDEGYSSC (72 aa)) form a disordered region. Over residues 188-198 (DQEEMEVDVES) the composition is skewed to acidic residues. Residues 222-235 (SLQSTASDEGYSSC) show a composition bias toward polar residues.

Efficient DNA binding requires dimerization with another bHLH protein. Binds DNA as a heterodimer with MAX.

It is found in the nucleus. Its function is as follows. Transcriptional repressor. MXI1 binds with MAX to form a sequence-specific DNA-binding protein complex which recognizes the core sequence 5'-CAC[GA]TG-3'. MXI1 thus antagonizes MYC transcriptional activity by competing for MAX. This is Max-interacting protein 1 (mxi1) from Danio rerio (Zebrafish).